Here is a 56-residue protein sequence, read N- to C-terminus: MASKTSDVRPKITLACVECKERNYITKKNRRNDPDRMELSKFCPRCRKHTAHRETR.

It belongs to the bacterial ribosomal protein bL33 family.

This chain is Large ribosomal subunit protein bL33, found in Nocardioides sp. (strain ATCC BAA-499 / JS614).